A 94-amino-acid chain; its full sequence is Large ribosomal subunit protein bL27 (94 aa).

Positions 1 to 9 (MLKLNLQFF) are excised as a propeptide.

It belongs to the bacterial ribosomal protein bL27 family. In terms of processing, the N-terminus is cleaved by ribosomal processing cysteine protease Prp.

This is Large ribosomal subunit protein bL27 from Staphylococcus epidermidis (strain ATCC 35984 / DSM 28319 / BCRC 17069 / CCUG 31568 / BM 3577 / RP62A).